Here is a 248-residue protein sequence, read N- to C-terminus: Mannose-binding protein C (248 aa).

The N-terminal stretch at 1 to 20 (MSLFPSLPLLLLSVVATSYS) is a signal peptide. Positions 42 to 99 (GINGFPGKDGRDGTKGEKGEPGQGLRGLQGPPGKLGPPGNPGPSGSPGPKGQKGDPGE) constitute a Collagen-like domain. Residues 43 to 111 (INGFPGKDGR…DCDSSLAASE (69 aa)) are disordered. The residue at position 47 (Pro-47) is a 4-hydroxyproline. Over residues 49-61 (KDGRDGTKGEKGE) the composition is skewed to basic and acidic residues. 4 positions are modified to 4-hydroxyproline: Pro-73, Pro-79, Pro-82, and Pro-88. Positions 75–87 (KLGPPGNPGPSGS) are enriched in pro residues. The stretch at 112–130 (RKALQTEMAHIKKWLTFSL) forms a coiled coil. The region spanning 134–245 (VGNKFFLTNG…CSSSHLALCE (112 aa)) is the C-type lectin domain. Cystine bridges form between Cys-155/Cys-244 and Cys-222/Cys-236.

As to quaternary structure, oligomeric complex of 3 or more homotrimers. Interacts with MASP1 and MASP2. Interacts with MEP1A and MEP1B and may inhibit their catalytic activity. In terms of processing, hydroxylation on proline residues within the sequence motif, GXPG, is most likely to be 4-hydroxy as this fits the requirement for 4-hydroxylation in vertebrates.

The protein resides in the secreted. Calcium-dependent lectin involved in innate immune defense. Binds mannose, fucose and N-acetylglucosamine on different microorganisms and activates the lectin complement pathway. Binds to late apoptotic cells, as well as to apoptotic blebs and to necrotic cells, but not to early apoptotic cells, facilitating their uptake by macrophages. In Trachypithecus obscurus (Dusky leaf-monkey), this protein is Mannose-binding protein C (MBL2).